Here is a 657-residue protein sequence, read N- to C-terminus: Protein mono-ADP-ribosyltransferase TIPARP (657 aa).

A compositionally biased stretch (acidic residues) spans 1 to 10; the sequence is MEVETTEPEP. The interval 1 to 22 is disordered; sequence MEVETTEPEPDCVVQPPSPSDD. The residue at position 39 (cysteine 39) is an ADP-ribosylcysteine. A Nuclear localization signal motif is present at residues 41 to 48; it reads KKKQEQKR. The disordered stretch occupies residues 121–154; that stretch reads QLPEAHPSTDAPEQGVPIQDHSFPPETISGTVAD. A C3H1-type zinc finger spans residues 238-265; the sequence is ENGIEICMDFLQGTCIYGRDCLKHHTVL. A WWE domain is found at 333–411; sequence STPPCSNSNS…RRPLFRSCFI (79 aa). In terms of domain architecture, PARP catalytic spans 449–657; it reads YPETWVYMHP…YEEVSNTVSI (209 aa).

Belongs to the ARTD/PARP family. As to quaternary structure, interacts with AHR. Auto-mono-ADP-ribosylated. In terms of tissue distribution, ubiquitously expressed.

The protein localises to the nucleus. The enzyme catalyses L-aspartyl-[protein] + NAD(+) = 4-O-(ADP-D-ribosyl)-L-aspartyl-[protein] + nicotinamide. It catalyses the reaction L-glutamyl-[protein] + NAD(+) = 5-O-(ADP-D-ribosyl)-L-glutamyl-[protein] + nicotinamide. The catalysed reaction is L-cysteinyl-[protein] + NAD(+) = S-(ADP-D-ribosyl)-L-cysteinyl-[protein] + nicotinamide + H(+). Its function is as follows. ADP-ribosyltransferase that mediates mono-ADP-ribosylation of glutamate, aspartate and cysteine residues on target proteins. Acts as a negative regulator of AHR by mediating mono-ADP-ribosylation of AHR, leading to inhibit transcription activator activity of AHR. The polypeptide is Protein mono-ADP-ribosyltransferase TIPARP (Mus musculus (Mouse)).